Consider the following 196-residue polypeptide: Peptidyl-tRNA hydrolase (196 aa).

TRNA is bound at residue Y18. Catalysis depends on H23, which acts as the Proton acceptor. TRNA contacts are provided by F69, N71, and N117.

This sequence belongs to the PTH family. In terms of assembly, monomer.

It is found in the cytoplasm. It catalyses the reaction an N-acyl-L-alpha-aminoacyl-tRNA + H2O = an N-acyl-L-amino acid + a tRNA + H(+). In terms of biological role, hydrolyzes ribosome-free peptidyl-tRNAs (with 1 or more amino acids incorporated), which drop off the ribosome during protein synthesis, or as a result of ribosome stalling. Its function is as follows. Catalyzes the release of premature peptidyl moieties from peptidyl-tRNA molecules trapped in stalled 50S ribosomal subunits, and thus maintains levels of free tRNAs and 50S ribosomes. This Marinobacter nauticus (strain ATCC 700491 / DSM 11845 / VT8) (Marinobacter aquaeolei) protein is Peptidyl-tRNA hydrolase.